The following is a 310-amino-acid chain: MVSLKTEIAGFSFDNCLMNAAGIYCMTKEELLAIENSEAGSFVTKTGTLEAREGNPQPRYADTDWGSINSMGLPNKGIDYYLDFVTELQDQDNSKNHVLSLVGLSPEETHIILKKVENSSYNGLIELNLSCPNVPGKPQIAYDFEMTDLILSEIFSYYQKPLGIKLPPYFDIVHFDQAATIFNKYPLAFINCVNSIGNGLVIDDETVVIKPKNGFGGIGGDFIKPTALANVHAFYKRLNPSIKIIGTGGVKNGRDAFEHILCGASMVQIGTALQKEGPEIFQRVSRELKEIMADKGYQSLEDFRGQLNYL.

Substrate contacts are provided by residues lysine 45, 69 to 73 (NSMGL), and asparagine 128. FMN is bound at residue 45 to 46 (KT). Asparagine 128 lines the FMN pocket. Cysteine 131 functions as the Nucleophile in the catalytic mechanism. Residues lysine 165 and valine 193 each contribute to the FMN site. A substrate-binding site is contributed by 194-195 (NS). Residues glycine 220, 248 to 249 (GG), and 270 to 271 (GT) each bind FMN.

Belongs to the dihydroorotate dehydrogenase family. Type 1 subfamily. In terms of assembly, homodimer. Requires FMN as cofactor.

It is found in the cytoplasm. The catalysed reaction is (S)-dihydroorotate + fumarate = orotate + succinate. The protein operates within pyrimidine metabolism; UMP biosynthesis via de novo pathway. Functionally, catalyzes the conversion of dihydroorotate to orotate with fumarate as the electron acceptor. The protein is Putative dihydroorotate dehydrogenase A (fumarate) (pyrD) of Streptococcus agalactiae serotype Ia (strain ATCC 27591 / A909 / CDC SS700).